Reading from the N-terminus, the 763-residue chain is MQRAGSSGGRGECDISGAGRLGLEEAARLSCAVHTSPGGGRRPGQAAGMSAKERPKGKVIKDSVTLLPCFYFVELPILASSVVSLYFLELTDVFKPVHSGFSCYDRSLSMPYIEPTQEAIPFLMLLSLAFAGPAITIMVGEGILYCCLSKRRNGVGLEPNINAGGCNFNSFLRRAVRFVGVHVFGLCSTALITDIIQLSTGYQAPYFLTVCKPNYTSLNVSCKENSYIVEDICSGSDLTVINSGRKSFPSQHATLAAFAAVYVSMYFNSTLTDSSKLLKPLLVFTFIICGIICGLTRITQYKNHPVDVYCGFLIGGGIALYLGLYAVGNFLPSDESMFQHRDALRSLTDLNQDPNRLLSAKNGSSSDGIAHTEGILNRNHRDASSLTNLKRANADVEIITPRSPMGKENMVTFSNTLPRANTPSVEDPVRRNASIHASMDSARSKQLLTQWKNKNESRKLSLQVIEPEPGQSPPRSIEMRSSSEPSRVGVNGDHHGPGNQYLKIQPGAVPGCNNSMPGGPRVSIQSRPGSSQLVHIPEETQENISTSPKSSSARAKWLKAAEKTVACNRSNSQPRIMQVIAMSKQQGVLQSSPKNTEGSTVSCTGSIRYKTLTDHEPSGIVRVEAHPENNRPIIQIPSTEGEGSGSWKWKAPEKGSLRQTYELNDLNRDSESCESLKDSFGSGDRKRSNIDSNEHHHHGITTIRVTPVEGSEIGSETLSISSSRDSTLRRKGNIILIPERSNSPENTRNIFYKGTSPTRAYKD.

The tract at residues valine 33 to arginine 54 is disordered. Serine 36 bears the Phosphoserine mark. 3 helical membrane-spanning segments follow: residues leucine 67 to phenylalanine 87, alanine 119 to valine 139, and phenylalanine 178 to leucine 198. Residues asparagine 214 and asparagine 219 are each glycosylated (N-linked (GlcNAc...) asparagine). Residues serine 247 to phenylalanine 267 traverse the membrane as a helical segment. Asparagine 268 is a glycosylation site (N-linked (GlcNAc...) asparagine). Helical transmembrane passes span lysine 276–threonine 296 and valine 308–glycine 328. A Phosphoserine modification is found at serine 346. Asparagine 362 carries N-linked (GlcNAc...) asparagine glycosylation. Serine 385 carries the post-translational modification Phosphoserine. Residue asparagine 432 is glycosylated (N-linked (GlcNAc...) asparagine). Residue serine 438 is modified to Phosphoserine. A glycan (N-linked (GlcNAc...) asparagine) is linked at asparagine 455. The interval arginine 458–glycine 529 is disordered. Phosphoserine occurs at positions 461 and 472. Asparagine 513, asparagine 543, and asparagine 568 each carry an N-linked (GlcNAc...) asparagine glycan. Serine 606 carries the post-translational modification Phosphoserine. The span at aspartate 669–glutamate 694 shows a compositional bias: basic and acidic residues. 2 disordered regions span residues aspartate 669 to histidine 698 and glutamate 739 to aspartate 763. A compositionally biased stretch (polar residues) spans arginine 740 to asparagine 749.

Belongs to the PA-phosphatase related phosphoesterase family. In terms of processing, O-glycosylated. Probably at Ser-346. In terms of tissue distribution, expressed by glutamatergic neurons (at protein level).

The protein localises to the postsynaptic density membrane. Postsynaptic density membrane protein that indirectly regulates glutamatergic synaptic transmission through lysophosphatidic acid (LPA)-mediated signaling pathways. Binds lysophosphatidic acid (LPA) and mediates its internalization into cells. Could act as receptor or a transporter of this lipid at the post-synaptic membrane. Modulates lysophosphatidic acid (LPA) activity in neuron axonal outgrowth during development by attenuating phospholipid-induced axon collapse. This is Phospholipid phosphatase-related protein type 4 from Homo sapiens (Human).